The sequence spans 375 residues: ATP phosphoribosyltransferase regulatory subunit (375 aa).

This sequence belongs to the class-II aminoacyl-tRNA synthetase family. HisZ subfamily. As to quaternary structure, heteromultimer composed of HisG and HisZ subunits.

Its subcellular location is the cytoplasm. Its pathway is amino-acid biosynthesis; L-histidine biosynthesis; L-histidine from 5-phospho-alpha-D-ribose 1-diphosphate: step 1/9. Its function is as follows. Required for the first step of histidine biosynthesis. May allow the feedback regulation of ATP phosphoribosyltransferase activity by histidine. In Agrobacterium fabrum (strain C58 / ATCC 33970) (Agrobacterium tumefaciens (strain C58)), this protein is ATP phosphoribosyltransferase regulatory subunit.